The primary structure comprises 402 residues: RNA-binding protein 42 (402 aa).

Residues 240–275 (ETASDDSVIGPSMPEPEPVHVEPVDTSTEDKKKGKQ) are disordered. Over residues 256–275 (EPVHVEPVDTSTEDKKKGKQ) the composition is skewed to basic and acidic residues. In terms of domain architecture, RRM spans 303-381 (FRIFCGDLGN…RPIKLRKSAW (79 aa)).

This sequence belongs to the RRM RBM42 family.

Its subcellular location is the nucleus. The protein localises to the cytoplasm. Functionally, may bind RNA. The sequence is that of RNA-binding protein 42 (rbm42) from Danio rerio (Zebrafish).